Reading from the N-terminus, the 436-residue chain is Phosphomethylpyrimidine synthase (436 aa).

Substrate contacts are provided by residues Asn68, Met97, Tyr126, His166, 188 to 190 (SRG), 229 to 232 (DGFR), and Glu268. His272 provides a ligand contact to Zn(2+). Position 295 (Tyr295) interacts with substrate. Position 336 (His336) interacts with Zn(2+). Cys412, Cys415, and Cys419 together coordinate [4Fe-4S] cluster.

Belongs to the ThiC family. Homodimer. Requires [4Fe-4S] cluster as cofactor.

It catalyses the reaction 5-amino-1-(5-phospho-beta-D-ribosyl)imidazole + S-adenosyl-L-methionine = 4-amino-2-methyl-5-(phosphooxymethyl)pyrimidine + CO + 5'-deoxyadenosine + formate + L-methionine + 3 H(+). The protein operates within cofactor biosynthesis; thiamine diphosphate biosynthesis. Its function is as follows. Catalyzes the synthesis of the hydroxymethylpyrimidine phosphate (HMP-P) moiety of thiamine from aminoimidazole ribotide (AIR) in a radical S-adenosyl-L-methionine (SAM)-dependent reaction. This chain is Phosphomethylpyrimidine synthase, found in Geobacter metallireducens (strain ATCC 53774 / DSM 7210 / GS-15).